The chain runs to 37 residues: Large ribosomal subunit protein bL36 (37 aa).

This sequence belongs to the bacterial ribosomal protein bL36 family.

The protein is Large ribosomal subunit protein bL36 of Alkaliphilus metalliredigens (strain QYMF).